The chain runs to 296 residues: Ribosomal RNA small subunit methyltransferase H (296 aa).

S-adenosyl-L-methionine-binding positions include 38-40, glutamate 57, phenylalanine 80, aspartate 103, and histidine 110; that span reads GVH.

The protein belongs to the methyltransferase superfamily. RsmH family.

It localises to the cytoplasm. The catalysed reaction is cytidine(1402) in 16S rRNA + S-adenosyl-L-methionine = N(4)-methylcytidine(1402) in 16S rRNA + S-adenosyl-L-homocysteine + H(+). Functionally, specifically methylates the N4 position of cytidine in position 1402 (C1402) of 16S rRNA. The sequence is that of Ribosomal RNA small subunit methyltransferase H from Borreliella burgdorferi (strain ATCC 35210 / DSM 4680 / CIP 102532 / B31) (Borrelia burgdorferi).